A 373-amino-acid chain; its full sequence is Mitochondrial fission regulator 2 (373 aa).

Ser-136 is modified (phosphoserine). Residues 151–179 (VSEAAIKKIAALEDELTSLRAQIAAIVAM) are a coiled coil. 2 disordered regions span residues 189–331 (GFIS…WDPV) and 346–373 (DDSF…GSRF). Pro residues predominate over residues 224-239 (SPPPLPPPPPPLPPPQ). 2 stretches are compositionally biased toward basic and acidic residues: residues 275 to 287 (KKTD…ESQR) and 297 to 310 (VLKD…RPVE). Phosphoserine occurs at positions 312 and 348. Residues 354–373 (RSWQGSPFSSPETSRNGSRF) show a composition bias toward polar residues.

Belongs to the MTFR1 family.

The protein localises to the mitochondrion. In terms of biological role, may play a role in mitochondrial aerobic respiration essentially in the testis. Can also promote mitochondrial fission. The protein is Mitochondrial fission regulator 2 (Mtfr2) of Rattus norvegicus (Rat).